We begin with the raw amino-acid sequence, 106 residues long: Thioredoxin (106 aa).

The Thioredoxin domain occupies 2–106 (VQVISNLDEF…LESLVQKSLA (105 aa)). Catalysis depends on nucleophile residues C30 and C33. C30 and C33 are oxidised to a cystine.

The protein belongs to the thioredoxin family.

In terms of biological role, participates in various redox reactions through the reversible oxidation of its active center dithiol to a disulfide and catalyzes dithiol-disulfide exchange reactions. This is Thioredoxin from Coprinus comatus (Shaggy mane).